Consider the following 163-residue polypeptide: Cytosolic iron-sulfur assembly component 2B (163 aa).

The protein belongs to the MIP18 family. Component of the CIA complex. Component of the MMXD complex, which includes CIAO1, ERCC2, CIAO2B, MMS19 and SLC25A5. Interacts with CIAO1, ERCC2 and MMS19; the interactions are direct. Interacts with KIF4A; the interaction facilitates the transfer of Fe-S clusters to KIF4A to ensure proper localization of KIF4A to the mitotic machinery. Interacts with CCDC117; the interaction is direct.

Its subcellular location is the nucleus. The protein localises to the cytoplasm. It localises to the cytoskeleton. It is found in the spindle. Component of the cytosolic iron-sulfur protein assembly (CIA) complex, a multiprotein complex that mediates the incorporation of iron-sulfur cluster into extramitochondrial Fe/S proteins. As a CIA complex component and in collaboration with CIAO1 and MMS19, binds to and facilitates the assembly of most cytosolic-nuclear Fe/S proteins. As part of the mitotic spindle-associated MMXD complex it plays a role in chromosome segregation, probably by facilitating iron-sulfur cluster assembly into ERCC2/XPD. Together with MMS19, facilitates the transfer of Fe-S clusters to the motor protein KIF4A, which ensures proper localization of KIF4A to mitotic machinery components to promote the progression of mitosis. The chain is Cytosolic iron-sulfur assembly component 2B from Mus musculus (Mouse).